The sequence spans 397 residues: MKQFLVVLLILSFVHGIIRVPLKRQKSMRKILKEKGKLSHLWTKQGNEFLQLSDSCSSPETASEPLMNYLDVEYFGQISIGTPPQQFTVIFDTGSSNLWVPSIYCTSQACTKHNRYRPSESTTYVSNGEAFFIQYGTGNLTGILGIDQVTVQGITVQSQTFAESVSEPGSTFQDSNFDGILGLAYPNLAVDNCIPVFDNMIAQNLVELPLFGVYMNRDPNSADGGELVLGGFDTSRFSGQLNWVPITVQGYWQIQVDSIQVAGQVIFCSDGCQAIVDTGTSLITGPSGDIEQLQNYIGVTNTNGEYGVSCSTLSLMPSVTFTINGLDYSLTPEQYMLEDGGGYCSSGFQGLDISPPSGPLWILGDVFIGQYYSVFDRGNNRVGFAPVVFYETTTNGA.

Positions 1 to 16 (MKQFLVVLLILSFVHG) are cleaved as a signal peptide. Positions 17 to 49 (IIRVPLKRQKSMRKILKEKGKLSHLWTKQGNEF) are cleaved as a propeptide — activation peptide. Residues 74 to 385 (YFGQISIGTP…DRGNNRVGFA (312 aa)) enclose the Peptidase A1 domain. Aspartate 92 is an active-site residue. Residues cysteine 105 and cysteine 110 are joined by a disulfide bond. An N-linked (GlcNAc...) asparagine glycan is attached at asparagine 139. Cysteines 268 and 272 form a disulfide. Aspartate 277 is a catalytic residue. The cysteines at positions 310 and 344 are disulfide-linked.

It belongs to the peptidase A1 family. As to quaternary structure, homodimer; disulfide-linked. Post-translationally, glycosylated. Contains high mannose-type oligosaccharide. As to expression, found in the larval foregut and adult stomach.

The protein localises to the endosome. It catalyses the reaction Similar to cathepsin D, but slightly broader specificity.. Its function is as follows. May have a role in immune function. Probably involved in the processing of antigenic peptides during MHC class II-mediated antigen presentation. In Aquarana catesbeiana (American bullfrog), this protein is Cathepsin E (CTSE).